A 203-amino-acid chain; its full sequence is Endo-type membrane-bound lytic murein transglycosylase A (203 aa).

A signal peptide spans 1–15 (MKLRWFAFLIVLLAG). Cysteine 16 carries the N-palmitoyl cysteine lipid modification. The S-diacylglycerol cysteine moiety is linked to residue cysteine 16.

This sequence belongs to the transglycosylase Slt family.

It localises to the cell outer membrane. It catalyses the reaction Endolytic cleavage of the (1-&gt;4)-beta-glycosidic linkage between N-acetylmuramic acid (MurNAc) and N-acetylglucosamine (GlcNAc) residues in peptidoglycan with concomitant formation of a 1,6-anhydrobond in the MurNAc residue.. Its function is as follows. Murein-degrading enzyme. May play a role in recycling of muropeptides during cell elongation and/or cell division. Preferentially cleaves at a distance of more than two disaccharide units from the ends of the glycan chain. This chain is Endo-type membrane-bound lytic murein transglycosylase A, found in Escherichia coli O127:H6 (strain E2348/69 / EPEC).